The sequence spans 113 residues: Large ribosomal subunit protein eL34 (113 aa).

This sequence belongs to the eukaryotic ribosomal protein eL34 family.

The sequence is that of Large ribosomal subunit protein eL34 from Methanopyrus kandleri (strain AV19 / DSM 6324 / JCM 9639 / NBRC 100938).